Consider the following 172-residue polypeptide: Adenine phosphoribosyltransferase (172 aa).

It belongs to the purine/pyrimidine phosphoribosyltransferase family. In terms of assembly, homodimer.

The protein resides in the cytoplasm. The enzyme catalyses AMP + diphosphate = 5-phospho-alpha-D-ribose 1-diphosphate + adenine. It functions in the pathway purine metabolism; AMP biosynthesis via salvage pathway; AMP from adenine: step 1/1. Its function is as follows. Catalyzes a salvage reaction resulting in the formation of AMP, that is energically less costly than de novo synthesis. The chain is Adenine phosphoribosyltransferase from Lactiplantibacillus plantarum (strain ATCC BAA-793 / NCIMB 8826 / WCFS1) (Lactobacillus plantarum).